Consider the following 118-residue polypeptide: Small ribosomal subunit protein uS13 (118 aa).

Positions H91 to K118 are disordered.

Belongs to the universal ribosomal protein uS13 family. In terms of assembly, part of the 30S ribosomal subunit. Forms a loose heterodimer with protein S19. Forms two bridges to the 50S subunit in the 70S ribosome.

Its function is as follows. Located at the top of the head of the 30S subunit, it contacts several helices of the 16S rRNA. In the 70S ribosome it contacts the 23S rRNA (bridge B1a) and protein L5 of the 50S subunit (bridge B1b), connecting the 2 subunits; these bridges are implicated in subunit movement. Contacts the tRNAs in the A and P-sites. The polypeptide is Small ribosomal subunit protein uS13 (Methylococcus capsulatus (strain ATCC 33009 / NCIMB 11132 / Bath)).